We begin with the raw amino-acid sequence, 1599 residues long: Lacto-N-biosidase (1599 aa).

A signal peptide (tat-type signal) is located at residues M1–A30. Position 150 (H150) interacts with beta-D-galactosyl-(1-&gt;3)-N-acetyl-D-glucosamine. PbH1 repeat units lie at residues V165 to K190, M224 to A255, F277 to Y299, S325 to Y347, C348 to R388, and C389 to S437. 4 residues coordinate Ca(2+): D178, D179, V182, and D238. Residues K244 and H245 each contribute to the beta-D-galactosyl-(1-&gt;3)-N-acetyl-D-glucosamine site. W387, D411, D418, and C441 together coordinate beta-D-galactosyl-(1-&gt;3)-N-acetyl-D-glucosamine. Catalysis depends on D411, which acts as the Proton donor/acceptor. The Nucleophile role is filled by D418. One copy of the PbH1 7 repeat lies at G469–A506. An FIVAR domain is found at D1436–L1498. Positions A1494–P1509 are enriched in basic and acidic residues. The tract at residues A1494 to T1568 is disordered. The segment covering D1535–S1558 has biased composition (gly residues). Residues D1559–T1568 show a composition bias toward low complexity. The chain crosses the membrane as a helical span at residues V1574 to A1594.

The protein belongs to the glycosyl hydrolase 136 (GH136) family. In terms of assembly, homodimer. Ca(2+) serves as cofactor. It depends on Mg(2+) as a cofactor. In terms of processing, predicted to be exported by the Tat system. The position of the signal peptide cleavage has not been experimentally proven.

Its subcellular location is the cell membrane. It carries out the reaction beta-D-Gal-(1-&gt;3)-beta-D-GlcNAc-(1-&gt;3)-beta-D-Gal-(1-&gt;4)-D-Glc + H2O = beta-D-galactosyl-(1-&gt;3)-N-acetyl-D-glucosamine + lactose. Requires the chaperone LnbY for its proper folding and active expression. Is potently and competitively inhibited by LNB-PUGNAc and LNB-NHAcDNJ in vitro. Present in the infant gut, this enzyme is involved in the assimilation of type-1 human milk oligosaccharides (HMOs). It hydrolyzes via a retaining mechanism the beta-D-GlcNAc-(1-&gt;3)-beta-D-Gal linkage in lacto-N-tetraose (LNT or beta-D-Gal-(1-&gt;3)-beta-D-GlcNAc-(1-&gt;3)-beta-D-Gal-(1-&gt;4)-D-Glc), an abundant HMO unique to human breast milk, releasing lacto-N-biose (LNB or beta-D-Gal-(1-&gt;3)-D-GlcNAc) and lactose. With a much lower efficiency, is also able to cleave the same linkage in lacto-N-fucopentaose I (alpha-Fuc(1-&gt;2)-beta-D-Gal-(1-&gt;3)-beta-D-GlcNAc(1-&gt;3)-beta-D-Gal-(1-&gt;4)-D-Glc), and sialyllacto-N-tetraose a (alpha-Neu5Ac-(2-&gt;3)-beta-D-Gal-(1-&gt;3)-beta-D-GlcNAc-(1-&gt;3)-beta-D-Gal-(1-&gt;4)-D-Glc). Is a key enzymatic factor for growth and proliferation of B.longum in the gut ecosystem of breast-fed infants. This chain is Lacto-N-biosidase, found in Bifidobacterium longum subsp. longum (strain ATCC 15707 / DSM 20219 / JCM 1217 / NCTC 11818 / E194b).